A 155-amino-acid chain; its full sequence is Arginine repressor (155 aa).

The protein belongs to the ArgR family.

The protein resides in the cytoplasm. The protein operates within amino-acid biosynthesis; L-arginine biosynthesis [regulation]. Functionally, regulates arginine biosynthesis genes. The polypeptide is Arginine repressor (Histophilus somni (strain 2336) (Haemophilus somnus)).